We begin with the raw amino-acid sequence, 364 residues long: UDP-N-acetylglucosamine--N-acetylmuramyl-(pentapeptide) pyrophosphoryl-undecaprenol N-acetylglucosamine transferase 1 (364 aa).

UDP-N-acetyl-alpha-D-glucosamine-binding positions include 10–12 (TGG), Asn-124, Ser-195, Ile-250, and Gln-295.

The protein belongs to the glycosyltransferase 28 family. MurG subfamily.

Its subcellular location is the cell membrane. The enzyme catalyses di-trans,octa-cis-undecaprenyl diphospho-N-acetyl-alpha-D-muramoyl-L-alanyl-D-glutamyl-meso-2,6-diaminopimeloyl-D-alanyl-D-alanine + UDP-N-acetyl-alpha-D-glucosamine = di-trans,octa-cis-undecaprenyl diphospho-[N-acetyl-alpha-D-glucosaminyl-(1-&gt;4)]-N-acetyl-alpha-D-muramoyl-L-alanyl-D-glutamyl-meso-2,6-diaminopimeloyl-D-alanyl-D-alanine + UDP + H(+). It participates in cell wall biogenesis; peptidoglycan biosynthesis. Its function is as follows. Cell wall formation. Catalyzes the transfer of a GlcNAc subunit on undecaprenyl-pyrophosphoryl-MurNAc-pentapeptide (lipid intermediate I) to form undecaprenyl-pyrophosphoryl-MurNAc-(pentapeptide)GlcNAc (lipid intermediate II). The chain is UDP-N-acetylglucosamine--N-acetylmuramyl-(pentapeptide) pyrophosphoryl-undecaprenol N-acetylglucosamine transferase 1 from Bacillus cereus (strain ATCC 10987 / NRS 248).